The following is a 186-amino-acid chain: Large ribosomal subunit protein uL10 (186 aa).

It belongs to the universal ribosomal protein uL10 family. As to quaternary structure, part of the ribosomal stalk of the 50S ribosomal subunit. The N-terminus interacts with L11 and the large rRNA to form the base of the stalk. The C-terminus forms an elongated spine to which L12 dimers bind in a sequential fashion forming a multimeric L10(L12)X complex.

Functionally, forms part of the ribosomal stalk, playing a central role in the interaction of the ribosome with GTP-bound translation factors. The protein is Large ribosomal subunit protein uL10 of Roseiflexus sp. (strain RS-1).